The chain runs to 380 residues: Cytochrome b (380 aa).

4 helical membrane passes run 33–53 (FGSLLGLCLISQILTGLFLAM), 77–98 (WLIRNLHANGASFFFICIYLHI), 113–133 (WNIGVVLLLLVMATAFVGYVL), and 178–198 (FFAFHFLLPFIVAAMTMLHLL). Heme b-binding residues include H83 and H97. The heme b site is built by H182 and H196. Position 201 (H201) interacts with a ubiquinone. The next 4 helical transmembrane spans lie at 226–246 (YKDLLGFAAVIILLTCLALFT), 288–308 (LGGVLALLASILVLMVVPILH), 320–340 (VTQFLFWALIANVAILTWIGG), and 347–367 (YIIIGQIASLTYFALFLLIMP).

It belongs to the cytochrome b family. In terms of assembly, the cytochrome bc1 complex contains 3 respiratory subunits (MT-CYB, CYC1 and UQCRFS1), 2 core proteins (UQCRC1 and UQCRC2) and probably 6 low-molecular weight proteins. Heme b is required as a cofactor.

Its subcellular location is the mitochondrion inner membrane. In terms of biological role, component of the ubiquinol-cytochrome c reductase complex (complex III or cytochrome b-c1 complex) that is part of the mitochondrial respiratory chain. The b-c1 complex mediates electron transfer from ubiquinol to cytochrome c. Contributes to the generation of a proton gradient across the mitochondrial membrane that is then used for ATP synthesis. The sequence is that of Cytochrome b (mt-cyb) from Pagrus major (Red sea bream).